A 392-amino-acid polypeptide reads, in one-letter code: L-rhamnonate dehydratase (392 aa).

The substrate site is built by His-22 and Arg-48. The Mg(2+) site is built by Asp-214, Glu-240, and Glu-268. His-318 functions as the Proton acceptor in the catalytic mechanism. Glu-338 lines the substrate pocket.

The protein belongs to the mandelate racemase/muconate lactonizing enzyme family. RhamD subfamily. In terms of assembly, homooctamer; tetramer of dimers. The cofactor is Mg(2+).

The enzyme catalyses L-rhamnonate = 2-dehydro-3-deoxy-L-rhamnonate + H2O. Functionally, catalyzes the dehydration of L-rhamnonate to 2-keto-3-deoxy-L-rhamnonate (KDR). This is L-rhamnonate dehydratase from Burkholderia ambifaria (strain ATCC BAA-244 / DSM 16087 / CCUG 44356 / LMG 19182 / AMMD) (Burkholderia cepacia (strain AMMD)).